An 864-amino-acid polypeptide reads, in one-letter code: Alanine--tRNA ligase (864 aa).

Residues His534, His538, Cys639, and His643 each coordinate Zn(2+).

Belongs to the class-II aminoacyl-tRNA synthetase family. It depends on Zn(2+) as a cofactor.

Its subcellular location is the cytoplasm. It carries out the reaction tRNA(Ala) + L-alanine + ATP = L-alanyl-tRNA(Ala) + AMP + diphosphate. In terms of biological role, catalyzes the attachment of alanine to tRNA(Ala) in a two-step reaction: alanine is first activated by ATP to form Ala-AMP and then transferred to the acceptor end of tRNA(Ala). Also edits incorrectly charged Ser-tRNA(Ala) and Gly-tRNA(Ala) via its editing domain. The chain is Alanine--tRNA ligase from Aster yellows witches'-broom phytoplasma (strain AYWB).